The following is a 32-amino-acid chain: Calcitonin (32 aa).

Residues cysteine 1 and cysteine 7 are joined by a disulfide bond. Proline amide is present on proline 32.

The protein belongs to the calcitonin family.

Its subcellular location is the secreted. In terms of biological role, calcitonin is a peptide hormone that causes a rapid but short-lived drop in the level of calcium and phosphate in blood by promoting the incorporation of those ions in the bones. Calcitonin function is mediated by the calcitonin receptor/CALCR and the CALCR-RAMP2 (AMYR2) receptor complex. This is Calcitonin (CALCA) from Sus scrofa (Pig).